The following is a 46-amino-acid chain: Phoratoxin (46 aa).

Intrachain disulfides connect Cys3–Cys40, Cys4–Cys32, and Cys16–Cys26. A Blocked carboxyl end (His) modification is found at His46.

Belongs to the plant thionin (TC 1.C.44) family.

It localises to the secreted. Thionins are small plant proteins which are toxic to animal cells. They seem to exert their toxic effect at the level of the cell membrane. Their precise function is not known. The protein is Phoratoxin of Phoradendron leucarpum subsp. tomentosum (California mistletoe).